The following is a 182-amino-acid chain: UPF0301 protein MCA0413 1 (182 aa).

It belongs to the UPF0301 (AlgH) family.

This is UPF0301 protein MCA0413 1 from Methylococcus capsulatus (strain ATCC 33009 / NCIMB 11132 / Bath).